The chain runs to 103 residues: Urease subunit beta (103 aa).

It belongs to the urease beta subunit family. In terms of assembly, heterotrimer of UreA (gamma), UreB (beta) and UreC (alpha) subunits. Three heterotrimers associate to form the active enzyme.

Its subcellular location is the cytoplasm. It catalyses the reaction urea + 2 H2O + H(+) = hydrogencarbonate + 2 NH4(+). It participates in nitrogen metabolism; urea degradation; CO(2) and NH(3) from urea (urease route): step 1/1. This Mycobacterium marinum (strain ATCC BAA-535 / M) protein is Urease subunit beta.